A 228-amino-acid chain; its full sequence is 6-carboxyhexanoate--CoA ligase (228 aa).

It belongs to the BioW family. Homodimer. Requires Mg(2+) as cofactor.

The catalysed reaction is heptanedioate + ATP + CoA = 6-carboxyhexanoyl-CoA + AMP + diphosphate. It participates in metabolic intermediate metabolism; pimeloyl-CoA biosynthesis; pimeloyl-CoA from pimelate: step 1/1. Functionally, catalyzes the transformation of pimelate into pimeloyl-CoA with concomitant hydrolysis of ATP to AMP. The polypeptide is 6-carboxyhexanoate--CoA ligase (Staphylococcus epidermidis (strain ATCC 35984 / DSM 28319 / BCRC 17069 / CCUG 31568 / BM 3577 / RP62A)).